Reading from the N-terminus, the 496-residue chain is Fascin (496 aa).

Belongs to the fascin family.

It is found in the cytoplasm. Its subcellular location is the cytoskeleton. In terms of biological role, acts as an actin bundling protein. In Strongylocentrotus purpuratus (Purple sea urchin), this protein is Fascin.